A 282-amino-acid polypeptide reads, in one-letter code: MAIKKYKPTSNGRRNMTSLVYKDVITKTTPEKSLLDSQSHSAGRNNAGKMTVRHRGGGNKRQYRIIDFKRIKDDVPATVKAIEYDPNRTANIALLVYADGVKSYIIAPKGLKVGDKVQSGPEADIKTGNALPLKNIPFGTVIHNIELKPGKGGQLVRSAGTSAQLLGKANDEKYVLVRLSSGEVRMVLSVNRATIGAVGNEEHELVNVGKAGRTRWAGQRPHVRGSVMNPNDHPHGGGEGKAPVGLPSPLSPWGKKTVGKKTRSKKNKTEKFIVRHRKGSKM.

Disordered regions lie at residues 31-56 (EKSL…RHRG) and 226-282 (SVMN…GSKM). The segment covering 35-44 (LDSQSHSAGR) has biased composition (polar residues). Basic residues predominate over residues 257 to 266 (TVGKKTRSKK).

Belongs to the universal ribosomal protein uL2 family. As to quaternary structure, part of the 50S ribosomal subunit. Forms a bridge to the 30S subunit in the 70S ribosome.

In terms of biological role, one of the primary rRNA binding proteins. Required for association of the 30S and 50S subunits to form the 70S ribosome, for tRNA binding and peptide bond formation. It has been suggested to have peptidyltransferase activity; this is somewhat controversial. Makes several contacts with the 16S rRNA in the 70S ribosome. The sequence is that of Large ribosomal subunit protein uL2 from Levilactobacillus brevis (strain ATCC 367 / BCRC 12310 / CIP 105137 / JCM 1170 / LMG 11437 / NCIMB 947 / NCTC 947) (Lactobacillus brevis).